The chain runs to 297 residues: Trans-enoyl reductase TOXD (297 aa).

NADP(+) contacts are provided by residues 162 to 165 and Tyr-203; that span reads STAT.

Belongs to the zinc-containing alcohol dehydrogenase family. In terms of assembly, monomer.

In terms of biological role, trans-enoyl reductase; part of the diffuse TOX2 gene cluster that mediates the biosynthesis of the HC-toxin, cyclic tetrapeptide of structure cyclo(D-Pro-L-Ala-D-Ala-L-Aeo), where Aeo stands for 2-amino-9,10-epoxi-8-oxodecanoic acid. HC-toxin is a determinant of specificity and virulence in the interaction between the producing fungus and its host, maize. TOXD does not seem to play a role in HC-toxin biosynthesis. The polypeptide is Trans-enoyl reductase TOXD (Cochliobolus carbonum (Maize leaf spot fungus)).